We begin with the raw amino-acid sequence, 377 residues long: Succinyl-diaminopimelate desuccinylase (377 aa).

Position 68 (His68) interacts with Zn(2+). Asp70 is a catalytic residue. Asp101 contributes to the Zn(2+) binding site. Glu135 acts as the Proton acceptor in catalysis. Residues Glu136, Glu164, and His350 each coordinate Zn(2+).

Belongs to the peptidase M20A family. DapE subfamily. In terms of assembly, homodimer. The cofactor is Zn(2+). It depends on Co(2+) as a cofactor.

The catalysed reaction is N-succinyl-(2S,6S)-2,6-diaminopimelate + H2O = (2S,6S)-2,6-diaminopimelate + succinate. It functions in the pathway amino-acid biosynthesis; L-lysine biosynthesis via DAP pathway; LL-2,6-diaminopimelate from (S)-tetrahydrodipicolinate (succinylase route): step 3/3. In terms of biological role, catalyzes the hydrolysis of N-succinyl-L,L-diaminopimelic acid (SDAP), forming succinate and LL-2,6-diaminopimelate (DAP), an intermediate involved in the bacterial biosynthesis of lysine and meso-diaminopimelic acid, an essential component of bacterial cell walls. The sequence is that of Succinyl-diaminopimelate desuccinylase from Psychromonas ingrahamii (strain DSM 17664 / CCUG 51855 / 37).